A 762-amino-acid chain; its full sequence is Polymeric immunoglobulin receptor (762 aa).

The N-terminal stretch at 1–18 (MTLFFLTCLLAVFPVVSM) is a signal peptide. The region spanning 19-120 (KSPIFGPPEI…GVGINNRGLS (102 aa)) is the Ig-like V-type 1; required for binding to polymeric IgA and IgM domain. Topologically, residues 19 to 636 (KSPIFGPPEI…SSAGQGGSSK (618 aa)) are extracellular. 2 disulfide bridges follow: cysteine 40–cysteine 110 and cysteine 56–cysteine 64. Asparagine 83 and asparagine 135 each carry an N-linked (GlcNAc...) asparagine glycan. Ig-like V-type domains lie at 145-238 (GGKV…DLHV), 251-351 (GSSV…ETTF), 363-460 (GGSV…LKIV), and 464-563 (PNLK…VYVA). 8 cysteine pairs are disulfide-bonded: cysteine 152–cysteine 221, cysteine 258–cysteine 324, cysteine 272–cysteine 280, cysteine 370–cysteine 443, cysteine 384–cysteine 394, cysteine 484–cysteine 546, cysteine 488–cysteine 522, and cysteine 498–cysteine 505. The N-linked (GlcNAc...) asparagine glycan is linked to asparagine 291. The N-linked (GlcNAc...) asparagine glycan is linked to asparagine 423. An N-linked (GlcNAc...) asparagine glycan is attached at asparagine 530. Residues 604 to 634 (FVDTQAKDPEDAAGGSIASADPGSSAGQGGS) are disordered. The helical transmembrane segment at 637–659 (VVVSTLVPLALVLALGVLVVGVL) threads the bilayer. Residues 660–762 (RARHRKNVDR…ANIQDGPSKA (103 aa)) lie on the Cytoplasmic side of the membrane.

As to quaternary structure, interacts (mainly via CDR1-like domain) with dimeric IgA. Interacts (mainly via CDR2-like domain) with pentameric IgM. Either free or part of the secretory IgA (sIgA) complex that consists of two, four or five IgA monomers, and two additional non-Ig polypeptides, namely the JCHAIN and the secretory component (the proteolytic product of PIGR). Free secretory component interacts with bacterial antigens toxA of C.difficile and eae of E.coli. In terms of processing, N-glycosylated. Carries predominantly biantennary complex type glycans which are largely non-fucosylated. Sialylation with NeuAc is common, except for Asn-291 which carries exclusively high mannose glycans. N-glycans attached to Asn-83: Gal2GlcNAc2Man3GlcNAc2; Gal2GlcNAc2Man3GlcNAc2(Fuc); Gal1GlcNAc1Man4GlcNAc2(Fuc); Gal1GlcNAc1Man3GlcNAc2; Gal1GlcNAc1Man4GlcNAc2 and NeuAc1Gal2GlcNAc2Man3GlcNAc2. N-glycans attached to Asn-135: Gal2GlcNAc2Man3GlcNAc2; Gal1GlcNAc1Man3GlcNAc2 and NeuAc1Gal2GlcNAc2Man3GlcNAc2. N-glycans attached to Asn-291: Man5-8GlcNAc2. N-glycans attached to Asn-423: NeuAc1Gal2GlcNAc2Man3GlcNAc2. N-glycans attached to Asn-530: Gal2GlcNAc2Man3GlcNAc2; Gal1GlcNAc1Man3GlcNAc2 and NeuAc1Gal2GlcNAc2Man3GlcNAc2. N-glycosylation is required for anchoring IgA molecules to mucus but is not necessary for Ig binding.

The protein localises to the cell membrane. It is found in the secreted. Mediates selective transcytosis of polymeric IgA and IgM across mucosal epithelial cells. Binds polymeric IgA and IgM at the basolateral surface of epithelial cells. The complex is then transported across the cell to be secreted at the apical surface. During this process, a cleavage occurs that separates the extracellular (known as the secretory component) from the transmembrane segment. Functionally, through its N-linked glycans ensures anchoring of secretory IgA (sIgA) molecules to mucus lining the epithelial surface to neutralize extracellular pathogens. On its own (free form) may act as a non-specific microbial scavenger to prevent pathogen interaction with epithelial cells. The protein is Polymeric immunoglobulin receptor (PIGR) of Equus asinus (Donkey).